A 216-amino-acid polypeptide reads, in one-letter code: Thiopurine S-methyltransferase (216 aa).

S-adenosyl-L-methionine-binding residues include Trp-10, Leu-45, Glu-66, and Arg-123.

It belongs to the class I-like SAM-binding methyltransferase superfamily. TPMT family.

It is found in the cytoplasm. The enzyme catalyses S-adenosyl-L-methionine + a thiopurine = S-adenosyl-L-homocysteine + a thiopurine S-methylether.. The polypeptide is Thiopurine S-methyltransferase (Pseudomonas putida (strain ATCC 47054 / DSM 6125 / CFBP 8728 / NCIMB 11950 / KT2440)).